A 262-amino-acid chain; its full sequence is MNPSVKKKRVIHQYREGQFTCKTDEVVEEFPLTVIVNGEEFVTLVCSPDHLKELVIGFLASEGVIRFENEIKRFTIDESMGFAYVDLVHSSEFQSSDFTKRVIGSCCGKGRHFYFLQDVKTAKTAIDRINISADTCMRLMKSLQEESQLFQHTGGVHNAGLCDTEKLFITRTDIGRHNALDKIYGYCLLHQIPLRDKILVFSGRISSEVLLKAAKLGVSIVISKSAPTELALNMAEELNITTVGFVRGESFNIYTHHQRITE.

Residue C107 is the Cysteine persulfide intermediate of the active site.

The protein belongs to the FdhD family.

The protein localises to the cytoplasm. In terms of biological role, required for formate dehydrogenase (FDH) activity. Acts as a sulfur carrier protein that transfers sulfur from IscS to the molybdenum cofactor prior to its insertion into FDH. In Bacillus pumilus (strain SAFR-032), this protein is Sulfur carrier protein FdhD.